A 279-amino-acid chain; its full sequence is Small ribosomal subunit protein uS3 (279 aa).

One can recognise a KH type-2 domain in the interval 17–86 (VDEYFLEKLE…NPQIDVQEVK (70 aa)). 2 stretches are compositionally biased toward low complexity: residues 206 to 233 (AEKKSPAAGAEPAKEAAAVPAPAESTAA) and 241 to 252 (ESEAAEAVTPEG). The disordered stretch occupies residues 206–279 (AEKKSPAAGA…VVKTDGDSQS (74 aa)).

This sequence belongs to the universal ribosomal protein uS3 family. In terms of assembly, part of the 30S ribosomal subunit.

In terms of biological role, binds the lower part of the 30S subunit head. This chain is Small ribosomal subunit protein uS3, found in Methanocella arvoryzae (strain DSM 22066 / NBRC 105507 / MRE50).